Consider the following 224-residue polypeptide: MKKLLLIAATSATILSSSISFAVDMGNDWYLRIDAGAAMFNKEKDKATGVKLKSNTTVPVDLGIGYYISENFRADLTLGTIIGGKLKKSGAATNAPFTGTNISASHKPTITRLLINGYVDLTNFDMFDVFAGAGVGPALVKEKITYNGITGLSSNTKNRTNISYKLTLGTSAQIADGVKAELAYSWIDDGRTKSKNVIYQGTSVSTGGMRYQSHNLTAGIRFDI.

The signal sequence occupies residues 1–22 (MKKLLLIAATSATILSSSISFA).

The chain is Putative adhesin RF_1314 from Rickettsia felis (strain ATCC VR-1525 / URRWXCal2) (Rickettsia azadi).